Reading from the N-terminus, the 298-residue chain is Ribosomal protein L11 methyltransferase (298 aa).

Residues threonine 152, glycine 176, aspartate 198, and asparagine 236 each contribute to the S-adenosyl-L-methionine site.

Belongs to the methyltransferase superfamily. PrmA family.

It localises to the cytoplasm. The enzyme catalyses L-lysyl-[protein] + 3 S-adenosyl-L-methionine = N(6),N(6),N(6)-trimethyl-L-lysyl-[protein] + 3 S-adenosyl-L-homocysteine + 3 H(+). Methylates ribosomal protein L11. The polypeptide is Ribosomal protein L11 methyltransferase (Polaromonas sp. (strain JS666 / ATCC BAA-500)).